The sequence spans 153 residues: LOB domain-containing protein 26 (153 aa).

The LOB domain occupies 4-105; that stretch reads NPCEVCRFQN…EEVSKTKKLL (102 aa). The tract at residues 126–153 is disordered; it reads KSKPSVLRKRKRKTKSSDESAIRVVEDS. The segment covering 140–153 has biased composition (basic and acidic residues); sequence KSSDESAIRVVEDS.

The protein belongs to the LOB domain-containing protein family.

The polypeptide is LOB domain-containing protein 26 (LBD26) (Arabidopsis thaliana (Mouse-ear cress)).